Reading from the N-terminus, the 76-residue chain is Large ribosomal subunit protein eL38 (76 aa).

It belongs to the eukaryotic ribosomal protein eL38 family.

This chain is Large ribosomal subunit protein eL38 (RpL38), found in Lysiphlebus testaceipes (Greenbugs aphid parastoid).